The sequence spans 310 residues: Antiviral protein II/III (310 aa).

The first 25 residues, 1–25 (MKMKVLEVVGLAISIWLMLTPPASS), serve as a signal peptide directing secretion. 2 cysteine pairs are disulfide-bonded: cysteine 57–cysteine 284 and cysteine 106–cysteine 123. The active site involves tyrosine 94. Residues tyrosine 142, glutamate 197, and arginine 200 contribute to the active site.

Belongs to the ribosome-inactivating protein family. Type 1 RIP subfamily. In terms of tissue distribution, PAP-II is expressed in early summer leaves (at protein level). PAP-III is expressed in late summer leaves (at protein level).

The catalysed reaction is Endohydrolysis of the N-glycosidic bond at one specific adenosine on the 28S rRNA.. In terms of biological role, possesses antiviral potency. Inhibits viral infection of plants (tobacco mosaic virus). Inhibits protein synthesis in both prokaryotes and eukaryotes. The protein is Antiviral protein II/III (PAP2) of Phytolacca americana (American pokeweed).